The sequence spans 97 residues: Large ribosomal subunit protein uL23 (97 aa).

Belongs to the universal ribosomal protein uL23 family. As to quaternary structure, part of the 50S ribosomal subunit. Contacts protein L29, and trigger factor when it is bound to the ribosome.

In terms of biological role, one of the early assembly proteins it binds 23S rRNA. One of the proteins that surrounds the polypeptide exit tunnel on the outside of the ribosome. Forms the main docking site for trigger factor binding to the ribosome. The sequence is that of Large ribosomal subunit protein uL23 from Agrobacterium fabrum (strain C58 / ATCC 33970) (Agrobacterium tumefaciens (strain C58)).